Here is a 98-residue protein sequence, read N- to C-terminus: Large ribosomal subunit protein uL23 (98 aa).

The protein belongs to the universal ribosomal protein uL23 family. In terms of assembly, part of the 50S ribosomal subunit. Contacts protein L29, and trigger factor when it is bound to the ribosome.

One of the early assembly proteins it binds 23S rRNA. One of the proteins that surrounds the polypeptide exit tunnel on the outside of the ribosome. Forms the main docking site for trigger factor binding to the ribosome. The chain is Large ribosomal subunit protein uL23 from Streptococcus equi subsp. equi (strain 4047).